The following is a 498-amino-acid chain: Flavin-dependent halogenase otaD (498 aa).

Residues Gly14, Gly17, and Glu47 each coordinate FAD. The chloride site is built by Ser326 and Gly327. Position 328 (Val328) interacts with FAD.

Belongs to the flavin-dependent halogenase family.

The enzyme catalyses ochratoxin B + FADH2 + chloride + O2 = ochratoxin A + FAD + 2 H2O. Its pathway is mycotoxin biosynthesis. Flavin-dependent halogenase; part of the gene cluster that mediates the biosynthesis of ochratoxin A (OTA), a mycotoxin composed of a chlorinated type I polyketide dihydroisocoumarin moiety linked to L-phenylalanine, and demonstrated to have nephrotoxic, immunotoxic, genotoxic, neurotoxic, and teratogenic properties. OtaD chlorinates ochratoxin B (OTB) at the C-5 position to form OTA. The pathway begins with the highly reducing polyketide synthase otaA that catalyzes the formation of the isocoumarin group during the initial stages of biosynthesis, starting from one acetate and 4 malonate units, to originate the characteristic pentaketide skeleton 7-methylmellein (7-MM) of the OTA molecule. The newly identified cyclase otaY might be involved in the polyketide cyclization reaction during the initial steps of the OTA biosynthesis. 7-MM is then oxidized into 7-carboxymellein (also called ochratoxin beta) by the cytochrome P450 monooxygenase otaC. The NRPS encoded by the otaB gene is involved in the linking of phenylalanine to the dihydroisocoumarin ring. The reaction catalyzed by NRPS results in the production of ochratoxin B (OTB), which is the non-chlorinated analog of OTA and which subsequently serves as the substrate of the halogenase otaD for chlorination activity to form the final molecular structure of OTA, containing a chlorine atom in the C-5 position of the molecule. The sequence is that of Flavin-dependent halogenase otaD from Aspergillus carbonarius (strain ITEM 5010).